The following is a 1020-amino-acid chain: Sodium/potassium-transporting ATPase subunit alpha-2 (1020 aa).

A propeptide spanning residues 1–5 (MGRGA) is cleaved from the precursor. The tract at residues 1 to 31 (MGRGAGREYSPAATTAENGGGKKKQKEKELD) is disordered. Residues 6 to 85 (GREYSPAATT…NALTPPPTTP (80 aa)) lie on the Cytoplasmic side of the membrane. Position 10 is a phosphoserine (S10). The interval 80–82 (PPP) is interaction with phosphoinositide-3 kinase. A helical transmembrane segment spans residues 86–106 (EWVKFCRQLFGGFSILLWIGA). Residues 107 to 129 (ILCFLAYGIQAAMEDEPSNDNLY) lie on the Extracellular side of the membrane. Residues 130–150 (LGVVLAAVVIVTGCFSYYQEA) traverse the membrane as a helical segment. At 151–286 (KSSKIMDSFK…VGRTPIAMEI (136 aa)) the chain is on the cytoplasmic side. Polar residues predominate over residues 212-227 (DNSSLTGESEPQTRSP). The interval 212 to 231 (DNSSLTGESEPQTRSPEFTH) is disordered. A helical membrane pass occupies residues 287–306 (EHFIQLITGVAVFPGVSFFV). The Extracellular segment spans residues 307 to 318 (LSLILGYSWLEA). A helical membrane pass occupies residues 319 to 336 (VIFLIGIIVANVPEGLLA). Residues 337–769 (TVTVCLTLTA…EEGRLVFDNL (433 aa)) are Cytoplasmic-facing. Residue D374 is the 4-aspartylphosphate intermediate of the active site. 4 positions are modified to phosphoserine: S439, S450, S496, and S559. T570 is modified (phosphothreonine). 2 positions are modified to phosphoserine: S587 and S672. Mg(2+) contacts are provided by D714 and D718. The chain crosses the membrane as a helical span at residues 770–789 (KKSIAYTLTSNIPEITPFLL). The Extracellular segment spans residues 790–799 (FIIANIPLPL). Residues 800-820 (GTVTILCIDLGTDMVPAISLA) form a helical membrane-spanning segment. Topologically, residues 821 to 840 (YEAAESDIMKRQPRNSQTDK) are cytoplasmic. At S826 the chain carries Phosphoserine. The chain crosses the membrane as a helical span at residues 841–863 (LVNERLISMAYGQIGMIQALGGF). Over 864-915 (FTYFVILAENGFLPSRLLGIRLDWDDRTMNDLEDSYGQEWTYEQRKVVEFTC) the chain is Extracellular. The helical transmembrane segment at 916–935 (HTAFFASIVVVQWADLIICK) threads the bilayer. Residues 936–948 (TRRNSVFQQGMKN) lie on the Cytoplasmic side of the membrane. S940 is modified (phosphoserine; by PKA). The chain crosses the membrane as a helical span at residues 949-967 (KILIFGLLEETALAAFLSY). Residues 968–982 (CPGMGVALRMYPLKV) are Extracellular-facing. A helical transmembrane segment spans residues 983 to 1003 (TWWFCAFPYSLLIFIYDEVRK). Over 1004–1020 (LILRRYPGGWVEKETYY) the chain is Cytoplasmic.

Belongs to the cation transport ATPase (P-type) (TC 3.A.3) family. Type IIC subfamily. As to quaternary structure, the sodium/potassium-transporting ATPase is composed of a catalytic alpha subunit, an auxiliary non-catalytic beta subunit and an additional regulatory subunit. Interacts with regulatory subunit FXYD1.

Its subcellular location is the membrane. It is found in the cell membrane. It catalyses the reaction K(+)(out) + Na(+)(in) + ATP + H2O = K(+)(in) + Na(+)(out) + ADP + phosphate + H(+). Its function is as follows. This is the catalytic component of the active enzyme, which catalyzes the hydrolysis of ATP coupled with the exchange of sodium and potassium ions across the plasma membrane. This action creates the electrochemical gradient of sodium and potassium, providing the energy for active transport of various nutrients. This Pongo abelii (Sumatran orangutan) protein is Sodium/potassium-transporting ATPase subunit alpha-2 (ATP1A2).